The sequence spans 129 residues: Flagellar assembly factor FliW (129 aa).

Belongs to the FliW family. Interacts with flagellins FlaA and FlaB but not with FlaC; recognizes glycosylated and non-glycosylated FlaA equally. Interacts with CsrA. May form a 3-way complex of flagellin, FliS and FliW simultaneously in which FliS and FliW do not directly interact.

Its subcellular location is the cytoplasm. Its function is as follows. Acts as an anti-CsrA protein, binds CsrA and prevents it from repressing translation of its target genes, one of which is flagellin. Binds to flagellin and participates in the assembly of the flagellum. Functionally, overexpression leads to increased levels of FlaA and FlaB, but levels of FlaC remain stable. Involved in post-transcriptional regulation of flagellin biosynthesis. This is Flagellar assembly factor FliW from Campylobacter jejuni subsp. jejuni serotype O:6 (strain 81116 / NCTC 11828).